The sequence spans 355 residues: UDP-N-acetylglucosamine--N-acetylmuramyl-(pentapeptide) pyrophosphoryl-undecaprenol N-acetylglucosamine transferase (355 aa).

UDP-N-acetyl-alpha-D-glucosamine-binding positions include 14 to 16 (TGG), Asn-123, Arg-164, Ser-190, and Gln-284.

The protein belongs to the glycosyltransferase 28 family. MurG subfamily.

The protein resides in the cell inner membrane. The enzyme catalyses di-trans,octa-cis-undecaprenyl diphospho-N-acetyl-alpha-D-muramoyl-L-alanyl-D-glutamyl-meso-2,6-diaminopimeloyl-D-alanyl-D-alanine + UDP-N-acetyl-alpha-D-glucosamine = di-trans,octa-cis-undecaprenyl diphospho-[N-acetyl-alpha-D-glucosaminyl-(1-&gt;4)]-N-acetyl-alpha-D-muramoyl-L-alanyl-D-glutamyl-meso-2,6-diaminopimeloyl-D-alanyl-D-alanine + UDP + H(+). The protein operates within cell wall biogenesis; peptidoglycan biosynthesis. In terms of biological role, cell wall formation. Catalyzes the transfer of a GlcNAc subunit on undecaprenyl-pyrophosphoryl-MurNAc-pentapeptide (lipid intermediate I) to form undecaprenyl-pyrophosphoryl-MurNAc-(pentapeptide)GlcNAc (lipid intermediate II). The chain is UDP-N-acetylglucosamine--N-acetylmuramyl-(pentapeptide) pyrophosphoryl-undecaprenol N-acetylglucosamine transferase from Synechocystis sp. (strain ATCC 27184 / PCC 6803 / Kazusa).